Here is a 400-residue protein sequence, read N- to C-terminus: 3-phenylpropionate/cinnamic acid dioxygenase ferredoxin--NAD(+) reductase component (400 aa).

T5–D36 is an FAD binding site. Residue S146–E174 coordinates NAD(+).

This sequence belongs to the bacterial ring-hydroxylating dioxygenase ferredoxin reductase family. This dioxygenase system consists of four proteins: the two subunits of the hydroxylase component (HcaE and HcaF), a ferredoxin (HcaC) and a ferredoxin reductase (HcaD). It depends on FAD as a cofactor.

It catalyses the reaction 2 reduced [2Fe-2S]-[ferredoxin] + NAD(+) + H(+) = 2 oxidized [2Fe-2S]-[ferredoxin] + NADH. It participates in aromatic compound metabolism; 3-phenylpropanoate degradation. Its function is as follows. Part of the multicomponent 3-phenylpropionate dioxygenase, that converts 3-phenylpropionic acid (PP) and cinnamic acid (CI) into 3-phenylpropionate-dihydrodiol (PP-dihydrodiol) and cinnamic acid-dihydrodiol (CI-dihydrodiol), respectively. The sequence is that of 3-phenylpropionate/cinnamic acid dioxygenase ferredoxin--NAD(+) reductase component from Escherichia coli O17:K52:H18 (strain UMN026 / ExPEC).